The following is a 148-amino-acid chain: Large ribosomal subunit protein bL9 (148 aa).

The protein belongs to the bacterial ribosomal protein bL9 family.

Its function is as follows. Binds to the 23S rRNA. In Aliarcobacter butzleri (strain RM4018) (Arcobacter butzleri), this protein is Large ribosomal subunit protein bL9.